The primary structure comprises 240 residues: MVQLWKLVLLCGLLAGTSASLPDIRGNDVLRKLKSGLERGLDTFDSTIEIIFQNLKTELESRCSDEVVEQQETENFLEQLISRIFQVVSRLTGVRIRNVQVPDITFEATSENSANVLIPITADVTVSLPFLGEIVDLDLNVDLQTTVSIETDTEDPQVVVGECTNNPESISLTVLHSRFGLVNDVVDIGVNLARRVVSSVVEGELCPRFRELLESLDAECVEKLIGESQDTTQQEPEGSR.

Positions 1-19 (MVQLWKLVLLCGLLAGTSA) are cleaved as a signal peptide. A disulfide bridge links Cys163 with Cys206.

This sequence belongs to the BPI/LBP/Plunc superfamily. Plunc family. Parotid glands.

It localises to the secreted. The sequence is that of Short palate, lung and nasal epithelium carcinoma-associated protein 2B (SPLUNC2B) from Bos taurus (Bovine).